The chain runs to 80 residues: UPF0291 protein LACR_1198 (80 aa).

It belongs to the UPF0291 family.

The protein localises to the cytoplasm. This chain is UPF0291 protein LACR_1198, found in Lactococcus lactis subsp. cremoris (strain SK11).